The chain runs to 406 residues: Imidazolonepropionase (406 aa).

Fe(3+) is bound by residues histidine 72 and histidine 74. The Zn(2+) site is built by histidine 72 and histidine 74. 3 residues coordinate 4-imidazolone-5-propanoate: arginine 81, tyrosine 144, and histidine 177. Residue tyrosine 144 participates in N-formimidoyl-L-glutamate binding. Histidine 242 contributes to the Fe(3+) binding site. Position 242 (histidine 242) interacts with Zn(2+). Residue glutamine 245 coordinates 4-imidazolone-5-propanoate. Residue aspartate 317 coordinates Fe(3+). Position 317 (aspartate 317) interacts with Zn(2+). Residues asparagine 319 and glycine 321 each coordinate N-formimidoyl-L-glutamate. Threonine 322 lines the 4-imidazolone-5-propanoate pocket.

It belongs to the metallo-dependent hydrolases superfamily. HutI family. The cofactor is Zn(2+). Fe(3+) serves as cofactor.

It localises to the cytoplasm. The catalysed reaction is 4-imidazolone-5-propanoate + H2O = N-formimidoyl-L-glutamate. Its pathway is amino-acid degradation; L-histidine degradation into L-glutamate; N-formimidoyl-L-glutamate from L-histidine: step 3/3. Its function is as follows. Catalyzes the hydrolytic cleavage of the carbon-nitrogen bond in imidazolone-5-propanoate to yield N-formimidoyl-L-glutamate. It is the third step in the universal histidine degradation pathway. This chain is Imidazolonepropionase, found in Yersinia pseudotuberculosis serotype O:3 (strain YPIII).